The chain runs to 277 residues: Cell death abnormality protein 2 (277 aa).

The region spanning 14–112 (FYFPGMSRED…EASLLSAYKK (99 aa)) is the SH2 domain. The SH3 1 domain occupies 113–173 (PIIEVVVGTF…PANYVQVQSG (61 aa)). The interval 179–217 (RISKGTSQSSIGSSGNGAERFSSTSTSSENAEAHPTLPT) is disordered. Positions 182-206 (KGTSQSSIGSSGNGAERFSSTSTSS) are enriched in low complexity. One can recognise an SH3 2 domain in the interval 214-275 (TLPTTAKVTF…PFTYIRFNTA (62 aa)).

The protein belongs to the CRK family. In terms of assembly, interacts with ced-5 (via C-terminus which contains a candidate SH3-binding, proline-rich region). Forms a ternary complex with ced-5 and ced-12. Interacts (via SH-2 domain) with src-1 (when activated and phosphorylated at 'Tyr-416').

Required for cell migration and engulfment of cell corpses but not for programmed cell death/apoptosis. Also has a role in the migration of the 2 gonadal distal tip cells (DTCs). The sequence is that of Cell death abnormality protein 2 from Caenorhabditis briggsae.